The sequence spans 294 residues: Cytidine deaminase (294 aa).

2 CMP/dCMP-type deaminase domains span residues 48-168 (DEDA…FGPK) and 186-294 (LTGD…VLLA). 89–91 (NME) provides a ligand contact to substrate. H102 is a binding site for Zn(2+). The active-site Proton donor is E104. Positions 129 and 132 each coordinate Zn(2+).

It belongs to the cytidine and deoxycytidylate deaminase family. As to quaternary structure, homodimer. The cofactor is Zn(2+).

The catalysed reaction is cytidine + H2O + H(+) = uridine + NH4(+). It carries out the reaction 2'-deoxycytidine + H2O + H(+) = 2'-deoxyuridine + NH4(+). Its function is as follows. This enzyme scavenges exogenous and endogenous cytidine and 2'-deoxycytidine for UMP synthesis. The chain is Cytidine deaminase from Escherichia coli (strain ATCC 8739 / DSM 1576 / NBRC 3972 / NCIMB 8545 / WDCM 00012 / Crooks).